Here is a 193-residue protein sequence, read N- to C-terminus: MELRSGNSMVVAPKSKGIIDPNTGKLIGSDDRFFHDINAELSDKGFLVTSADALITWARTGSLMWMSFGLACCAIEMMQCSMPHYDNERFGYAPRASPRQSDVMVVAGTLTNKMAPALRKVYDQMPEPRYVISMGSCANGGGYYHYSYSVVRGCDRIVPVDIYVPGCPPTAEALLYGILLLQKKIRRTGSIER.

Residues cysteine 72, cysteine 73, cysteine 137, and cysteine 167 each coordinate [4Fe-4S] cluster.

The protein belongs to the complex I 20 kDa subunit family. NDH-1 is composed of 14 different subunits. Subunits NuoB, C, D, E, F, and G constitute the peripheral sector of the complex. [4Fe-4S] cluster is required as a cofactor.

It is found in the cell inner membrane. The catalysed reaction is a quinone + NADH + 5 H(+)(in) = a quinol + NAD(+) + 4 H(+)(out). In terms of biological role, NDH-1 shuttles electrons from NADH, via FMN and iron-sulfur (Fe-S) centers, to quinones in the respiratory chain. The immediate electron acceptor for the enzyme in this species is believed to be ubiquinone. Couples the redox reaction to proton translocation (for every two electrons transferred, four hydrogen ions are translocated across the cytoplasmic membrane), and thus conserves the redox energy in a proton gradient. The polypeptide is NADH-quinone oxidoreductase subunit B (Bartonella quintana (strain Toulouse) (Rochalimaea quintana)).